The chain runs to 66 residues: Large ribosomal subunit protein bL33c (66 aa).

The protein belongs to the bacterial ribosomal protein bL33 family.

It localises to the plastid. The protein localises to the chloroplast. The chain is Large ribosomal subunit protein bL33c from Aethionema grandiflorum (Persian stone-cress).